Consider the following 330-residue polypeptide: Tyrosine-protein phosphatase yvh1 (330 aa).

The 143-residue stretch at 45 to 187 (NDLSEISKNL…LRVYFECNYQ (143 aa)) folds into the Tyrosine-protein phosphatase domain. The active-site Phosphocysteine intermediate is the Cys-131.

The protein belongs to the protein-tyrosine phosphatase family. Non-receptor class dual specificity subfamily.

It localises to the cytoplasm. It is found in the nucleus. It catalyses the reaction O-phospho-L-tyrosyl-[protein] + H2O = L-tyrosyl-[protein] + phosphate. May be directly involved in signal transduction and/or cell cycle regulation. It is necessary for maintaining growth rate or spore germination. Could show both activity toward tyrosine-protein phosphate as well as with serine-protein phosphate. The sequence is that of Tyrosine-protein phosphatase yvh1 (yvh1) from Schizosaccharomyces pombe (strain 972 / ATCC 24843) (Fission yeast).